Here is a 428-residue protein sequence, read N- to C-terminus: Histidine--tRNA ligase (428 aa).

This sequence belongs to the class-II aminoacyl-tRNA synthetase family. Homodimer.

It localises to the cytoplasm. It catalyses the reaction tRNA(His) + L-histidine + ATP = L-histidyl-tRNA(His) + AMP + diphosphate + H(+). This Lactobacillus delbrueckii subsp. bulgaricus (strain ATCC BAA-365 / Lb-18) protein is Histidine--tRNA ligase.